The sequence spans 775 residues: Subtilisin-like protease SBT1.5 (775 aa).

The N-terminal stretch at 1–19 (MAFFFYFFFLLTLSSPSSS) is a signal peptide. Residues 20 to 103 (ASSSNSLTYI…VIPEQVRHLH (84 aa)) constitute a propeptide, activation peptide. Residues 27 to 103 (TYIVHVDHEA…VIPEQVRHLH (77 aa)) form the Inhibitor I9 domain. One can recognise a Peptidase S8 domain in the interval 107–617 (SPEFLGLRST…SGHVHPTKAM (511 aa)). The active-site Charge relay system is D137. The N-linked (GlcNAc...) asparagine glycan is linked to N196. The active-site Charge relay system is the H210. The 93-residue stretch at 367-459 (MYPLVYGGSL…VGASGGDEIR (93 aa)) folds into the PA domain. S549 functions as the Charge relay system in the catalytic mechanism. Residues N599, N638, and N762 are each glycosylated (N-linked (GlcNAc...) asparagine).

This sequence belongs to the peptidase S8 family.

It localises to the secreted. The protein is Subtilisin-like protease SBT1.5 of Arabidopsis thaliana (Mouse-ear cress).